A 288-amino-acid polypeptide reads, in one-letter code: Acetyl-coenzyme A carboxylase carboxyl transferase subunit beta (288 aa).

Positions 34–288 (LFAKCPACKH…HLVAFHGGGQ (255 aa)) constitute a CoA carboxyltransferase N-terminal domain. Positions 38, 41, 56, and 59 each coordinate Zn(2+). The C4-type zinc-finger motif lies at 38 to 59 (CPACKHMIYKKDLGLAKICPTC).

It belongs to the AccD/PCCB family. As to quaternary structure, acetyl-CoA carboxylase is a heterohexamer composed of biotin carboxyl carrier protein (AccB), biotin carboxylase (AccC) and two subunits each of ACCase subunit alpha (AccA) and ACCase subunit beta (AccD). Requires Zn(2+) as cofactor.

The protein localises to the cytoplasm. The enzyme catalyses N(6)-carboxybiotinyl-L-lysyl-[protein] + acetyl-CoA = N(6)-biotinyl-L-lysyl-[protein] + malonyl-CoA. The protein operates within lipid metabolism; malonyl-CoA biosynthesis; malonyl-CoA from acetyl-CoA: step 1/1. Functionally, component of the acetyl coenzyme A carboxylase (ACC) complex. Biotin carboxylase (BC) catalyzes the carboxylation of biotin on its carrier protein (BCCP) and then the CO(2) group is transferred by the transcarboxylase to acetyl-CoA to form malonyl-CoA. This is Acetyl-coenzyme A carboxylase carboxyl transferase subunit beta from Streptococcus pyogenes serotype M28 (strain MGAS6180).